The sequence spans 353 residues: Heat-inducible transcription repressor HrcA (353 aa).

The protein belongs to the HrcA family.

Functionally, negative regulator of class I heat shock genes (grpE-dnaK-dnaJ and groELS operons). Prevents heat-shock induction of these operons. This Anaeromyxobacter dehalogenans (strain 2CP-1 / ATCC BAA-258) protein is Heat-inducible transcription repressor HrcA.